The sequence spans 149 residues: MSTNICSFKDRCVSILCCKFCKQVLSSRGMKAVLLADTEIDLFSTDIPPTNAVDFTGRCYFTKICKCKLKDIACLKCGNIVGYHVIVPCSSCLLSCNNGHFWMFHSQAVYDINRLDSTGVNVLLWGNLPEIEESTDEDVLNISAEECIR.

This sequence belongs to the FAM72 family. In terms of assembly, interacts with UNG. In terms of tissue distribution, may be up-regulated in malignant colon cancers, compared to normal colon and colon adenomas. Expression is also elevated in other common cancer types, including breast, lung, uterus, and ovary.

Its subcellular location is the cytoplasm. It localises to the mitochondrion. May play a role in the regulation of cellular reactive oxygen species metabolism. May participate in cell growth regulation. The polypeptide is Protein FAM72A (FAM72A) (Homo sapiens (Human)).